A 377-amino-acid chain; its full sequence is Spore coat protein SA (377 aa).

The protein belongs to the glycosyltransferase group 1 family. Glycosyltransferase 4 subfamily.

The chain is Spore coat protein SA (cotSA) from Bacillus subtilis (strain 168).